The primary structure comprises 142 residues: Required for drug-induced death protein 1 (142 aa).

Disordered regions lie at residues 1–32 (MTVGARLRSKAESSLLRRGPRGRGRTEGDEEA) and 46–66 (EAAAESGTSAADERGPGTRGA). Residues 116 to 138 (VVIGLQGFAAAYSAPFAVATSVV) form a helical membrane-spanning segment.

The protein resides in the membrane. Its function is as follows. Regulates drug efflux through modulation of ABCB1 localization and activity. The protein is Required for drug-induced death protein 1 of Homo sapiens (Human).